We begin with the raw amino-acid sequence, 268 residues long: 4-diphosphocytidyl-2-C-methyl-D-erythritol kinase (268 aa).

Residue K10 is part of the active site. Residue 101 to 111 (PTQAGLGGGST) participates in ATP binding. Residue D143 is part of the active site.

The protein belongs to the GHMP kinase family. IspE subfamily.

The enzyme catalyses 4-CDP-2-C-methyl-D-erythritol + ATP = 4-CDP-2-C-methyl-D-erythritol 2-phosphate + ADP + H(+). The protein operates within isoprenoid biosynthesis; isopentenyl diphosphate biosynthesis via DXP pathway; isopentenyl diphosphate from 1-deoxy-D-xylulose 5-phosphate: step 3/6. In terms of biological role, catalyzes the phosphorylation of the position 2 hydroxy group of 4-diphosphocytidyl-2C-methyl-D-erythritol. The polypeptide is 4-diphosphocytidyl-2-C-methyl-D-erythritol kinase (Helicobacter pylori (strain ATCC 700392 / 26695) (Campylobacter pylori)).